Reading from the N-terminus, the 360-residue chain is Diacylglycerol O-acyltransferase 3 (360 aa).

The tract at residues 153-182 (KAKAMKKMTEMDSESSSSSESSDSDCDKGK) is disordered. 4 residues coordinate [2Fe-2S] cluster: Cys-265, Cys-270, Cys-298, and Cys-302.

The protein belongs to the diacylglycerol acyltransferase family. Requires [2Fe-2S] cluster as cofactor.

It carries out the reaction an acyl-CoA + a 1,2-diacyl-sn-glycerol = a triacyl-sn-glycerol + CoA. The protein operates within glycerolipid metabolism; triacylglycerol biosynthesis. Functionally, involved in triacylglycerol (TAG) biosynthesis. Catalyzes the acylation of the sn-3 hydroxy group of sn-1,2-diacylglycerol using acyl-CoA. May preferentially use linolenoyl-CoA as substrate and to a lesser extent linoleoyl-CoA. May contribute to the active recycling of linoleate and linolenate into TAG when seed oil breakdown is blocked. This Arabidopsis thaliana (Mouse-ear cress) protein is Diacylglycerol O-acyltransferase 3.